The sequence spans 374 residues: Queuine tRNA-ribosyltransferase (374 aa).

Residue Asp-89 is the Proton acceptor of the active site. Substrate contacts are provided by residues 89–93, Asp-143, Gln-187, and Gly-214; that span reads DSGGF. The interval 245-251 is RNA binding; that stretch reads GVGKPED. The active-site Nucleophile is the Asp-264. Residues 269 to 273 form an RNA binding; important for wobble base 34 recognition region; that stretch reads TRNAR. Positions 302, 304, 307, and 333 each coordinate Zn(2+).

Belongs to the queuine tRNA-ribosyltransferase family. In terms of assembly, homodimer. Within each dimer, one monomer is responsible for RNA recognition and catalysis, while the other monomer binds to the replacement base PreQ1. Zn(2+) serves as cofactor.

It catalyses the reaction 7-aminomethyl-7-carbaguanine + guanosine(34) in tRNA = 7-aminomethyl-7-carbaguanosine(34) in tRNA + guanine. The protein operates within tRNA modification; tRNA-queuosine biosynthesis. Its function is as follows. Catalyzes the base-exchange of a guanine (G) residue with the queuine precursor 7-aminomethyl-7-deazaguanine (PreQ1) at position 34 (anticodon wobble position) in tRNAs with GU(N) anticodons (tRNA-Asp, -Asn, -His and -Tyr). Catalysis occurs through a double-displacement mechanism. The nucleophile active site attacks the C1' of nucleotide 34 to detach the guanine base from the RNA, forming a covalent enzyme-RNA intermediate. The proton acceptor active site deprotonates the incoming PreQ1, allowing a nucleophilic attack on the C1' of the ribose to form the product. After dissociation, two additional enzymatic reactions on the tRNA convert PreQ1 to queuine (Q), resulting in the hypermodified nucleoside queuosine (7-(((4,5-cis-dihydroxy-2-cyclopenten-1-yl)amino)methyl)-7-deazaguanosine). This Photorhabdus laumondii subsp. laumondii (strain DSM 15139 / CIP 105565 / TT01) (Photorhabdus luminescens subsp. laumondii) protein is Queuine tRNA-ribosyltransferase.